Consider the following 457-residue polypeptide: MTKKVYVKTFGCQMNEYDSDKMVDVLNAAEGLEKTDTPEDADIILFNTCSVREKAQEKVFSDLGRVRELKEAKPDLLIGVGGCVASQEGASIVARAPYVDLVFGPQTLHRLPQMIDARRESGRAQVDITFPEIEKFDHLPPARVEGPSAFVSIMEGCSKYCSYCVVPYTRGDEVSRPLDDVLTEVAGLADQGVREVTLLGQNVNAYRGAIAAGSAEIADFATLIEYVADIPGIERIRYTTSHPKEFTQRLLDVYAKVPKLVDHLHLPVQHGSDRILMAMKRGYTVLEYKSVIRKLRAIRPNLSLSTNIIVGFPGETDADFDKTMALVHEMSYDTSFSFIYSPRPGTPAANLADDTPRELKLKRLQHLQATIEENVARISQSMLGKVERILVEGPSRKDPNELAGRTENNRVVNFPAPSAAHPRLIGQMIDVKINHAYPHSLRGELVLAHGDASAATH.

Residues 3 to 120 (KKVYVKTFGC…LPQMIDARRE (118 aa)) enclose the MTTase N-terminal domain. Residues Cys-12, Cys-49, Cys-83, Cys-157, Cys-161, and Cys-164 each coordinate [4Fe-4S] cluster. The 235-residue stretch at 143 to 377 (RVEGPSAFVS…QATIEENVAR (235 aa)) folds into the Radical SAM core domain. The TRAM domain maps to 380 to 447 (QSMLGKVERI…PHSLRGELVL (68 aa)).

Belongs to the methylthiotransferase family. MiaB subfamily. In terms of assembly, monomer. The cofactor is [4Fe-4S] cluster.

It is found in the cytoplasm. It carries out the reaction N(6)-dimethylallyladenosine(37) in tRNA + (sulfur carrier)-SH + AH2 + 2 S-adenosyl-L-methionine = 2-methylsulfanyl-N(6)-dimethylallyladenosine(37) in tRNA + (sulfur carrier)-H + 5'-deoxyadenosine + L-methionine + A + S-adenosyl-L-homocysteine + 2 H(+). In terms of biological role, catalyzes the methylthiolation of N6-(dimethylallyl)adenosine (i(6)A), leading to the formation of 2-methylthio-N6-(dimethylallyl)adenosine (ms(2)i(6)A) at position 37 in tRNAs that read codons beginning with uridine. In Burkholderia pseudomallei (strain 1710b), this protein is tRNA-2-methylthio-N(6)-dimethylallyladenosine synthase.